We begin with the raw amino-acid sequence, 259 residues long: Protein GrpE (259 aa).

Disordered regions lie at residues 1–75 (MNSD…KGSD) and 227–259 (GPGP…KDEN). Low complexity predominate over residues 20-40 (NNPSENFVSSSNSNESVNQVE). The span at 46–60 (EVEHQVKNDSVDTAK) shows a compositional bias: basic and acidic residues. Residues 61–73 (EQSSTSCESNIKG) are compositionally biased toward polar residues.

It belongs to the GrpE family. In terms of assembly, homodimer.

The protein resides in the cytoplasm. Its function is as follows. Participates actively in the response to hyperosmotic and heat shock by preventing the aggregation of stress-denatured proteins, in association with DnaK and GrpE. It is the nucleotide exchange factor for DnaK and may function as a thermosensor. Unfolded proteins bind initially to DnaJ; upon interaction with the DnaJ-bound protein, DnaK hydrolyzes its bound ATP, resulting in the formation of a stable complex. GrpE releases ADP from DnaK; ATP binding to DnaK triggers the release of the substrate protein, thus completing the reaction cycle. Several rounds of ATP-dependent interactions between DnaJ, DnaK and GrpE are required for fully efficient folding. This chain is Protein GrpE, found in Prochlorococcus marinus (strain NATL1A).